The chain runs to 919 residues: Probable dipeptidyl-aminopeptidase B (919 aa).

The disordered stretch occupies residues 1 to 89 (MGANSRVNDD…DGYVPSGGKP (89 aa)). The Cytoplasmic portion of the chain corresponds to 1-95 (MGANSRVNDD…GGKPAQRRTR (95 aa)). The span at 27–38 (DSSSTASISLTL) shows a compositional bias: low complexity. Positions 44 to 55 (HTATEPSKSTNG) are enriched in polar residues. The chain crosses the membrane as a helical; Signal-anchor for type II membrane protein span at residues 96 to 116 (IVFWLLVALCVGGWAMAFIIM). The Vacuolar portion of the chain corresponds to 117 to 919 (ATSPNNRHST…RVIRRLLHFG (803 aa)). Positions 121–150 (NNRHSTSDSSSGGSESEIVKPNTPHDGKKI) are disordered. Residues 127–136 (SDSSSGGSES) show a composition bias toward low complexity. Asparagine 207, asparagine 303, asparagine 355, asparagine 577, and asparagine 665 each carry an N-linked (GlcNAc...) asparagine glycan. Residue serine 760 is the Charge relay system of the active site. Residues asparagine 814 and asparagine 819 are each glycosylated (N-linked (GlcNAc...) asparagine). Catalysis depends on charge relay system residues aspartate 837 and histidine 870.

Belongs to the peptidase S9B family.

It is found in the vacuole membrane. It carries out the reaction Release of an N-terminal dipeptide, Xaa-Yaa-|-Zaa-, from a polypeptide, preferentially when Yaa is Pro, provided Zaa is neither Pro nor hydroxyproline.. Functionally, type IV dipeptidyl-peptidase which removes N-terminal dipeptides sequentially from polypeptides having unsubstituted N-termini provided that the penultimate residue is proline. The protein is Probable dipeptidyl-aminopeptidase B (DAPB) of Arthroderma otae (strain ATCC MYA-4605 / CBS 113480) (Microsporum canis).